A 253-amino-acid chain; its full sequence is Trypsin delta (253 aa).

A signal peptide spans 1–22 (MLKFVILLSAVACALGGTVPEG). Residues 23–30 (LLPQLDGR) constitute a propeptide, activation peptide. One can recognise a Peptidase S1 domain in the interval 31–253 (IVGGSATTIS…ALRSWVISNA (223 aa)). An intrachain disulfide couples C56 to C72. Residues H71 and D116 each act as charge relay system in the active site. Disulfide bonds link C180–C197 and C206–C230. Catalysis depends on S210, which acts as the Charge relay system.

The protein belongs to the peptidase S1 family.

The protein resides in the secreted. It localises to the extracellular space. It catalyses the reaction Preferential cleavage: Arg-|-Xaa, Lys-|-Xaa.. The protein is Trypsin delta of Drosophila melanogaster (Fruit fly).